The sequence spans 1755 residues: Transposon Ty1-OR Gag-Pol polyprotein (1755 aa).

Polar residues-rich tracts occupy residues 1 to 10 (MESQQLSNYP), 48 to 60 (TKAN…TPAS), and 127 to 152 (QSQF…GNTF). Disordered stretches follow at residues 1-93 (MESQ…MMTQ), 126-173 (PQSQ…RPPP), and 352-421 (GSRN…SKST). Low complexity predominate over residues 153–165 (TDSSSADSDMTST). The segment at 299–401 (NNGIHINNKV…NSKSKTARAH (103 aa)) is RNA-binding. A compositionally biased stretch (low complexity) spans 402–418 (NVSTSNNSPSTDNDSIS). Ser-416 carries the phosphoserine modification. The active-site For protease activity; shared with dimeric partner is Asp-461. An integrase-type zinc finger-like region spans residues 583–640 (NVHTSESTRKYPYPFIHRMLAHANAQTIRYSLKNNTITYFNESDVDWSSAIDYQCPDC). Residues 660–835 (NSYEPFQYLH…AGLDISTLLP (176 aa)) form the Integrase catalytic domain. Mg(2+) is bound by residues Asp-671 and Asp-736. Disordered stretches follow at residues 956–1087 (SKAV…ETEK), 1092–1111 (RSPS…NIVP), and 1130–1187 (DLPL…DNET). Over residues 960 to 969 (SPTDSTPPST) the composition is skewed to low complexity. Over residues 1005 to 1015 (STPQISNIEST) the composition is skewed to polar residues. Over residues 1038-1053 (ESSHASKSKDFRHSDS) the composition is skewed to basic and acidic residues. Polar residues-rich tracts occupy residues 1054-1082 (YSEN…QISD) and 1101-1111 (PENNSSHNIVP). Positions 1178–1212 (KKRSLEDNETEIKVSRDTWNTKNMRSLEPPRSKKR) match the Bipartite nuclear localization signal motif. A Reverse transcriptase Ty1/copia-type domain is found at 1338–1476 (NNYYITQLDI…DILGLEIKYQ (139 aa)). Asp-1346, Asp-1427, Asp-1428, Asp-1610, Glu-1652, and Asp-1685 together coordinate Mg(2+). The RNase H Ty1/copia-type domain maps to 1610-1752 (DASYGNQPYY…IKTFKLLTNK (143 aa)).

In terms of assembly, the capsid protein forms a homotrimer, from which the VLPs are assembled. The protease is a homodimer, whose active site consists of two apposed aspartic acid residues. Post-translationally, initially, virus-like particles (VLPs) are composed of the structural unprocessed proteins Gag and Gag-Pol, and also contain the host initiator methionine tRNA (tRNA(i)-Met) which serves as a primer for minus-strand DNA synthesis, and a dimer of genomic Ty RNA. Processing of the polyproteins occurs within the particle and proceeds by an ordered pathway, called maturation. First, the protease (PR) is released by autocatalytic cleavage of the Gag-Pol polyprotein yielding capsid protein p45 and a Pol-p154 precursor protein. This cleavage is a prerequisite for subsequent processing of Pol-p154 at the remaining sites to release the mature structural and catalytic proteins. Maturation takes place prior to the RT reaction and is required to produce transposition-competent VLPs.

Its subcellular location is the cytoplasm. The protein resides in the nucleus. It carries out the reaction DNA(n) + a 2'-deoxyribonucleoside 5'-triphosphate = DNA(n+1) + diphosphate. The catalysed reaction is Endonucleolytic cleavage to 5'-phosphomonoester.. In terms of biological role, capsid protein (CA) is the structural component of the virus-like particle (VLP), forming the shell that encapsulates the retrotransposons dimeric RNA genome. The particles are assembled from trimer-clustered units and there are holes in the capsid shells that allow for the diffusion of macromolecules. CA also has nucleocapsid-like chaperone activity, promoting primer tRNA(i)-Met annealing to the multipartite primer-binding site (PBS), dimerization of Ty1 RNA and initiation of reverse transcription. Its function is as follows. The aspartyl protease (PR) mediates the proteolytic cleavages of the Gag and Gag-Pol polyproteins after assembly of the VLP. Functionally, reverse transcriptase/ribonuclease H (RT) is a multifunctional enzyme that catalyzes the conversion of the retro-elements RNA genome into dsDNA within the VLP. The enzyme displays a DNA polymerase activity that can copy either DNA or RNA templates, and a ribonuclease H (RNase H) activity that cleaves the RNA strand of RNA-DNA heteroduplexes during plus-strand synthesis and hydrolyzes RNA primers. The conversion leads to a linear dsDNA copy of the retrotransposon that includes long terminal repeats (LTRs) at both ends. Integrase (IN) targets the VLP to the nucleus, where a subparticle preintegration complex (PIC) containing at least integrase and the newly synthesized dsDNA copy of the retrotransposon must transit the nuclear membrane. Once in the nucleus, integrase performs the integration of the dsDNA into the host genome. The polypeptide is Transposon Ty1-OR Gag-Pol polyprotein (TY1B-OR) (Saccharomyces cerevisiae (strain ATCC 204508 / S288c) (Baker's yeast)).